The chain runs to 92 residues: DNA-directed RNA polymerase subunit Rpo11 (92 aa).

It belongs to the archaeal Rpo11/eukaryotic RPB11/RPC19 RNA polymerase subunit family. As to quaternary structure, part of the RNA polymerase complex.

It is found in the cytoplasm. The enzyme catalyses RNA(n) + a ribonucleoside 5'-triphosphate = RNA(n+1) + diphosphate. DNA-dependent RNA polymerase (RNAP) catalyzes the transcription of DNA into RNA using the four ribonucleoside triphosphates as substrates. This Methanosarcina barkeri (strain Fusaro / DSM 804) protein is DNA-directed RNA polymerase subunit Rpo11.